We begin with the raw amino-acid sequence, 115 residues long: Toxin-like structure LSTX-D1 (115 aa).

Residues 1 to 22 (MKVLVLFSVLFLTLFSYSSTEA) form the signal peptide. A propeptide spanning residues 23-44 (IDEFDSDAEEDMLSLMANEQVR) is cleaved from the precursor. 4 cysteine pairs are disulfide-bonded: Cys48–Cys63, Cys55–Cys72, Cys62–Cys87, and Cys74–Cys85.

The protein belongs to the neurotoxin 19 (CSTX) family. 01 subfamily. As to expression, expressed by the venom gland.

It is found in the secreted. This chain is Toxin-like structure LSTX-D1, found in Lycosa singoriensis (Wolf spider).